Here is a 196-residue protein sequence, read N- to C-terminus: Large ribosomal subunit protein uL18 (196 aa).

It belongs to the universal ribosomal protein uL18 family. Part of the 50S ribosomal subunit. Contacts the 5S and 23S rRNAs.

In terms of biological role, this is one of the proteins that bind and probably mediate the attachment of the 5S RNA into the large ribosomal subunit, where it forms part of the central protuberance. This is Large ribosomal subunit protein uL18 from Thermofilum pendens (strain DSM 2475 / Hrk 5).